The chain runs to 316 residues: Phosphate acyltransferase (316 aa).

This sequence belongs to the PlsX family. As to quaternary structure, homodimer. Probably interacts with PlsY.

Its subcellular location is the cytoplasm. The catalysed reaction is a fatty acyl-[ACP] + phosphate = an acyl phosphate + holo-[ACP]. Its pathway is lipid metabolism; phospholipid metabolism. Functionally, catalyzes the reversible formation of acyl-phosphate (acyl-PO(4)) from acyl-[acyl-carrier-protein] (acyl-ACP). This enzyme utilizes acyl-ACP as fatty acyl donor, but not acyl-CoA. The polypeptide is Phosphate acyltransferase (Chlamydia felis (strain Fe/C-56) (Chlamydophila felis)).